The primary structure comprises 248 residues: MAMQLEICANSAASCRQAELGGATRVELCAGIPEGGTTPSAGEMAVARSLIAIPIHVIIRPRAGDFVYSSEEIEAMCYDIRVVRSLGMEGVVFGCLTPEGGYDEEANSRLLKEAQGMQLTFHRAFDVCAAPFEMLEKLIAAGFHRVLTSGCAPTALEGKDMIGALNKQATGRIGIMAGCGIRLGNIETLARHTGITQFHSSLRHDIPSSMRFRRPEVSMGGTVKIDEYSRPETSADMVRQAVDILQGI.

The protein belongs to the CutC family.

The protein resides in the cytoplasm. This is PF03932 family protein CutC from Porphyromonas gingivalis (strain ATCC BAA-308 / W83).